Reading from the N-terminus, the 58-residue chain is Potassium channel toxin alpha-KTx 9.9 (58 aa).

The first 21 residues, 1–21 (KKTSRLFTLVLIVLAMNVMMA), serve as a signal peptide directing secretion. The propeptide occupies 22 to 30 (IISDPVVEA). Intrachain disulfides connect cysteine 33-cysteine 49, cysteine 36-cysteine 54, and cysteine 40-cysteine 56.

The protein belongs to the short scorpion toxin superfamily. Potassium channel inhibitor family. Alpha-KTx 09 subfamily. In terms of tissue distribution, expressed by the venom gland.

The protein localises to the secreted. In terms of biological role, potassium channel inhibitor. The protein is Potassium channel toxin alpha-KTx 9.9 of Buthus israelis (Israeli scorpion).